Reading from the N-terminus, the 679-residue chain is Penicillin-binding protein 1A (679 aa).

The segment covering 1 to 14 (MTERKREHKDRKQN) has biased composition (basic residues). The tract at residues 1-20 (MTERKREHKDRKQNKNSPKN) is disordered. Topologically, residues 1–30 (MTERKREHKDRKQNKNSPKNQSKVTKFLKW) are cytoplasmic. The helical; Signal-anchor for type II membrane protein transmembrane segment at 31-51 (FFIGILLLGITAVTVVGIYVL) threads the bilayer. Residues 52–679 (SIIRSSPELD…QYKEVDNLVE (628 aa)) are Extracellular-facing. The tract at residues 72–244 (SILYDDQGNF…PTSYDGLSEA (173 aa)) is transglycosylase. The active-site Proton donor; for transglycosylase activity is Glu-111. The segment at 378–663 (ASATIIDYKT…TSPIFGKIMG (286 aa)) is transpeptidase. The active-site Acyl-ester intermediate; for transpeptidase activity is the Ser-417.

This sequence in the N-terminal section; belongs to the glycosyltransferase 51 family. In the C-terminal section; belongs to the transpeptidase family.

It is found in the cell membrane. The enzyme catalyses [GlcNAc-(1-&gt;4)-Mur2Ac(oyl-L-Ala-gamma-D-Glu-L-Lys-D-Ala-D-Ala)](n)-di-trans,octa-cis-undecaprenyl diphosphate + beta-D-GlcNAc-(1-&gt;4)-Mur2Ac(oyl-L-Ala-gamma-D-Glu-L-Lys-D-Ala-D-Ala)-di-trans,octa-cis-undecaprenyl diphosphate = [GlcNAc-(1-&gt;4)-Mur2Ac(oyl-L-Ala-gamma-D-Glu-L-Lys-D-Ala-D-Ala)](n+1)-di-trans,octa-cis-undecaprenyl diphosphate + di-trans,octa-cis-undecaprenyl diphosphate + H(+). It carries out the reaction Preferential cleavage: (Ac)2-L-Lys-D-Ala-|-D-Ala. Also transpeptidation of peptidyl-alanyl moieties that are N-acyl substituents of D-alanine.. Its pathway is cell wall biogenesis; peptidoglycan biosynthesis. Cell wall formation. Synthesis of cross-linked peptidoglycan from the lipid intermediates. The enzyme has a penicillin-insensitive transglycosylase N-terminal domain (formation of linear glycan strands) and a penicillin-sensitive transpeptidase C-terminal domain (cross-linking of the peptide subunits). In Clostridium perfringens (strain 13 / Type A), this protein is Penicillin-binding protein 1A (pbpA).